Here is a 288-residue protein sequence, read N- to C-terminus: Acetyl-coenzyme A carboxylase carboxyl transferase subunit beta (288 aa).

The CoA carboxyltransferase N-terminal domain maps to 34 to 288; it reads LFAKCPACKH…HLVAFHGGGQ (255 aa). Zn(2+) contacts are provided by Cys-38, Cys-41, Cys-56, and Cys-59. Residues 38-59 form a C4-type zinc finger; sequence CPACKHMIYKKDLGLAKICPTC.

It belongs to the AccD/PCCB family. Acetyl-CoA carboxylase is a heterohexamer composed of biotin carboxyl carrier protein (AccB), biotin carboxylase (AccC) and two subunits each of ACCase subunit alpha (AccA) and ACCase subunit beta (AccD). It depends on Zn(2+) as a cofactor.

It localises to the cytoplasm. The catalysed reaction is N(6)-carboxybiotinyl-L-lysyl-[protein] + acetyl-CoA = N(6)-biotinyl-L-lysyl-[protein] + malonyl-CoA. It participates in lipid metabolism; malonyl-CoA biosynthesis; malonyl-CoA from acetyl-CoA: step 1/1. Functionally, component of the acetyl coenzyme A carboxylase (ACC) complex. Biotin carboxylase (BC) catalyzes the carboxylation of biotin on its carrier protein (BCCP) and then the CO(2) group is transferred by the transcarboxylase to acetyl-CoA to form malonyl-CoA. This Streptococcus dysgalactiae subsp. equisimilis (strain GGS_124) protein is Acetyl-coenzyme A carboxylase carboxyl transferase subunit beta.